A 211-amino-acid chain; its full sequence is LexA repressor (211 aa).

Positions 29 to 49 (VREICTAVGLRSTSTVHSHLN) form a DNA-binding region, H-T-H motif. Residues Ser-131 and Lys-169 each act as for autocatalytic cleavage activity in the active site.

Belongs to the peptidase S24 family. In terms of assembly, homodimer.

It carries out the reaction Hydrolysis of Ala-|-Gly bond in repressor LexA.. Represses a number of genes involved in the response to DNA damage (SOS response), including recA and lexA. In the presence of single-stranded DNA, RecA interacts with LexA causing an autocatalytic cleavage which disrupts the DNA-binding part of LexA, leading to derepression of the SOS regulon and eventually DNA repair. The polypeptide is LexA repressor (Clostridioides difficile (strain 630) (Peptoclostridium difficile)).